Consider the following 203-residue polypeptide: Ribosomal RNA small subunit methyltransferase G (203 aa).

S-adenosyl-L-methionine contacts are provided by residues Gly73, Leu78, 124-125, and Arg138; that span reads VE.

Belongs to the methyltransferase superfamily. RNA methyltransferase RsmG family.

The protein resides in the cytoplasm. It carries out the reaction guanosine(527) in 16S rRNA + S-adenosyl-L-methionine = N(7)-methylguanosine(527) in 16S rRNA + S-adenosyl-L-homocysteine. Its function is as follows. Specifically methylates the N7 position of guanine in position 527 of 16S rRNA. This chain is Ribosomal RNA small subunit methyltransferase G, found in Haemophilus ducreyi (strain 35000HP / ATCC 700724).